A 715-amino-acid polypeptide reads, in one-letter code: Dynein axonemal intermediate chain 7 (715 aa).

The tract at residues 291-322 (AVSKDLQEENKQENESNSVHEEETKAEGQGDV) is disordered. The span at 295–318 (DLQEENKQENESNSVHEEETKAEG) shows a compositional bias: basic and acidic residues.

The protein belongs to the DNAI7 family. Part of the multisubunit axonemal dynein complex formed at least of two heavy chains and a number of intermediate and light chains. Associates with tubulin. Interacts with microtubule. In terms of processing, ubiquitinated. Ubiquitination leads to its degradation through the 26S proteasome. Ubiquitin-proteasome-mediated DNAI7 degradation occurs in mitosis.

The protein localises to the cell projection. It is found in the cilium. The protein resides in the cytoplasm. Via its association with the multisubunit axonemal dynein complex, is potentially involved in the regulation of cilia function. May act as a cell cycle regulator. The sequence is that of Dynein axonemal intermediate chain 7 from Bos taurus (Bovine).